The chain runs to 191 residues: Ureidoglycolate lyase (191 aa).

It belongs to the ureidoglycolate lyase family. As to quaternary structure, homodimer.

The enzyme catalyses (S)-ureidoglycolate = urea + glyoxylate. It participates in nitrogen metabolism; (S)-allantoin degradation. Catalyzes the catabolism of the allantoin degradation intermediate (S)-ureidoglycolate, generating urea and glyoxylate. Involved in the utilization of allantoin as secondary nitrogen source when primary sources are limiting. This chain is Ureidoglycolate lyase, found in Schizosaccharomyces pombe (strain 972 / ATCC 24843) (Fission yeast).